The chain runs to 511 residues: Bifunctional purine biosynthesis protein PurH (511 aa).

The 145-residue stretch at 1-145 folds into the MGS-like domain; the sequence is MKRRAIISVS…KNHAYVTAVV (145 aa).

The protein belongs to the PurH family.

The enzyme catalyses (6R)-10-formyltetrahydrofolate + 5-amino-1-(5-phospho-beta-D-ribosyl)imidazole-4-carboxamide = 5-formamido-1-(5-phospho-D-ribosyl)imidazole-4-carboxamide + (6S)-5,6,7,8-tetrahydrofolate. It catalyses the reaction IMP + H2O = 5-formamido-1-(5-phospho-D-ribosyl)imidazole-4-carboxamide. The protein operates within purine metabolism; IMP biosynthesis via de novo pathway; 5-formamido-1-(5-phospho-D-ribosyl)imidazole-4-carboxamide from 5-amino-1-(5-phospho-D-ribosyl)imidazole-4-carboxamide (10-formyl THF route): step 1/1. Its pathway is purine metabolism; IMP biosynthesis via de novo pathway; IMP from 5-formamido-1-(5-phospho-D-ribosyl)imidazole-4-carboxamide: step 1/1. The protein is Bifunctional purine biosynthesis protein PurH of Anoxybacillus flavithermus (strain DSM 21510 / WK1).